The chain runs to 847 residues: FAST kinase domain-containing protein 1, mitochondrial (847 aa).

K360 carries the N6-acetyllysine modification. The 61-residue stretch at 777–837 (IALEFLDSKA…KDARMDYLRE (61 aa)) folds into the RAP domain.

The protein belongs to the FAST kinase family. In terms of tissue distribution, expression detected in spleen, thymus, testis, ovary, colon, heart, smooth muscle, kidney, brain, lung, liver and white adipose tissue with highest expression in heart.

It is found in the mitochondrion. In terms of biological role, involved in the down-regulation of mitochondrial MT-ND3 mRNA levels which leads to decreased respiratory complex I abundance and activity. This is FAST kinase domain-containing protein 1, mitochondrial (FASTKD1) from Homo sapiens (Human).